The sequence spans 392 residues: Protein-glutamate methylesterase/protein-glutamine glutaminase (392 aa).

Positions 9-126 (TVLIVDDSPF…GADIQALARD (118 aa)) constitute a Response regulatory domain. D60 bears the 4-aspartylphosphate mark. The tract at residues 148–194 (VSRISSASGSRPPWTAGAASENTNRLSSPGSTSSTLGSAKGRSLDSG) is disordered. The span at 173-185 (LSSPGSTSSTLGS) shows a compositional bias: low complexity. Residues 198-392 (PKYPVEIVAI…RHIVECVQRR (195 aa)) enclose the CheB-type methylesterase domain. Residues S210, H237, and D334 contribute to the active site.

It belongs to the CheB family. In terms of processing, phosphorylated by CheA. Phosphorylation of the N-terminal regulatory domain activates the methylesterase activity.

The protein localises to the cytoplasm. It carries out the reaction [protein]-L-glutamate 5-O-methyl ester + H2O = L-glutamyl-[protein] + methanol + H(+). It catalyses the reaction L-glutaminyl-[protein] + H2O = L-glutamyl-[protein] + NH4(+). In terms of biological role, involved in chemotaxis. Part of a chemotaxis signal transduction system that modulates chemotaxis in response to various stimuli. Catalyzes the demethylation of specific methylglutamate residues introduced into the chemoreceptors (methyl-accepting chemotaxis proteins or MCP) by CheR. Also mediates the irreversible deamidation of specific glutamine residues to glutamic acid. In Desulfitobacterium hafniense (strain Y51), this protein is Protein-glutamate methylesterase/protein-glutamine glutaminase.